The following is a 236-amino-acid chain: Peptidase E (236 aa).

Catalysis depends on charge relay system residues Ser122, Asp137, and His159.

This sequence belongs to the peptidase S51 family.

Its subcellular location is the cytoplasm. The enzyme catalyses Dipeptidase E catalyzes the hydrolysis of dipeptides Asp-|-Xaa. It does not act on peptides with N-terminal Glu, Asn or Gln, nor does it cleave isoaspartyl peptides.. Hydrolyzes dipeptides containing N-terminal aspartate residues. May play a role in allowing the cell to use peptide aspartate to spare carbon otherwise required for the synthesis of the aspartate family of amino acids. The protein is Peptidase E of Shewanella oneidensis (strain ATCC 700550 / JCM 31522 / CIP 106686 / LMG 19005 / NCIMB 14063 / MR-1).